The sequence spans 367 residues: Putative threonine-phosphate decarboxylase (367 aa).

Residues 12 to 13, N29, and N152 each bind O-phospho-L-threonine; that span reads HG. An N6-(pyridoxal phosphate)lysine modification is found at K213. O-phospho-L-threonine-binding residues include R320 and R334.

It belongs to the class-II pyridoxal-phosphate-dependent aminotransferase family. Pyridoxal 5'-phosphate serves as cofactor.

It carries out the reaction O-phospho-L-threonine + H(+) = (R)-1-aminopropan-2-yl phosphate + CO2. The protein operates within cofactor biosynthesis; adenosylcobalamin biosynthesis. Functionally, decarboxylates L-threonine-O-3-phosphate to yield (R)-1-amino-2-propanol O-2-phosphate, the precursor for the linkage between the nucleotide loop and the corrin ring in cobalamin. This is Putative threonine-phosphate decarboxylase (cobD) from Caldanaerobacter subterraneus subsp. tengcongensis (strain DSM 15242 / JCM 11007 / NBRC 100824 / MB4) (Thermoanaerobacter tengcongensis).